A 157-amino-acid polypeptide reads, in one-letter code: Small ribosomal subunit protein uS7 (157 aa).

It belongs to the universal ribosomal protein uS7 family. Part of the 30S ribosomal subunit. Contacts proteins S9 and S11.

One of the primary rRNA binding proteins, it binds directly to 16S rRNA where it nucleates assembly of the head domain of the 30S subunit. Is located at the subunit interface close to the decoding center, probably blocks exit of the E-site tRNA. This chain is Small ribosomal subunit protein uS7, found in Psychrobacter sp. (strain PRwf-1).